The primary structure comprises 167 residues: Endoribonuclease YbeY (167 aa).

Positions 132, 136, and 142 each coordinate Zn(2+).

This sequence belongs to the endoribonuclease YbeY family. Requires Zn(2+) as cofactor.

It is found in the cytoplasm. Single strand-specific metallo-endoribonuclease involved in late-stage 70S ribosome quality control and in maturation of the 3' terminus of the 16S rRNA. The polypeptide is Endoribonuclease YbeY (Clostridium beijerinckii (strain ATCC 51743 / NCIMB 8052) (Clostridium acetobutylicum)).